Here is a 370-residue protein sequence, read N- to C-terminus: Protein-tyrosine sulfotransferase 1 (370 aa).

At 1–8 the chain is on the cytoplasmic side; sequence MVGKLKQN. The chain crosses the membrane as a helical; Signal-anchor for type II membrane protein span at residues 9–25; it reads LLLACLVISSVTVFYLG. Topologically, residues 26 to 370 are lumenal; the sequence is QHAMECHHRI…KEKPQTEQVE (345 aa). A glycan (N-linked (GlcNAc...) asparagine) is linked at Asn60. 79-83 lines the 3'-phosphoadenylyl sulfate pocket; it reads RSGTT. Cys97 and Cys157 are joined by a disulfide. Glu100 acts as the Proton donor/acceptor in catalysis. The interval 102-106 is interaction with peptide substrate; sequence RVIPR. 3'-phosphoadenylyl sulfate is bound by residues Arg184, Ser192, and Arg196. Cys226 and Cys234 form a disulfide bridge. Tyr239 serves as a coordination point for 3'-phosphoadenylyl sulfate. Asn262 carries N-linked (GlcNAc...) asparagine glycosylation. 3'-phosphoadenylyl sulfate contacts are provided by residues 286 to 295 and Lys301; that span reads STDQVIKPVN.

It belongs to the protein sulfotransferase family. As to quaternary structure, homodimer. Can also form heterodimers with TPST2. In terms of processing, N-glycosylated.

It localises to the golgi apparatus membrane. The enzyme catalyses L-tyrosyl-[protein] + 3'-phosphoadenylyl sulfate = O-sulfo-L-tyrosine-[protein] + adenosine 3',5'-bisphosphate + H(+). In terms of biological role, catalyzes the O-sulfation of tyrosine residues within acidic motifs of polypeptides, using 3'-phosphoadenylyl sulfate (PAPS) as cosubstrate. This Rattus norvegicus (Rat) protein is Protein-tyrosine sulfotransferase 1 (Tpst1).